The chain runs to 227 residues: 2,3-bisphosphoglycerate-dependent phosphoglycerate mutase (227 aa).

Residues 7-14 (RHGQSEWN), 20-21 (TG), arginine 59, 86-89 (ERHY), lysine 97, 113-114 (RR), and 182-183 (GN) contribute to the substrate site. The active-site Tele-phosphohistidine intermediate is the histidine 8. Catalysis depends on glutamate 86, which acts as the Proton donor/acceptor.

Belongs to the phosphoglycerate mutase family. BPG-dependent PGAM subfamily. Homodimer.

The enzyme catalyses (2R)-2-phosphoglycerate = (2R)-3-phosphoglycerate. Its pathway is carbohydrate degradation; glycolysis; pyruvate from D-glyceraldehyde 3-phosphate: step 3/5. In terms of biological role, catalyzes the interconversion of 2-phosphoglycerate and 3-phosphoglycerate. The polypeptide is 2,3-bisphosphoglycerate-dependent phosphoglycerate mutase (Neisseria meningitidis serogroup A / serotype 4A (strain DSM 15465 / Z2491)).